The sequence spans 478 residues: Ribosomal RNA small subunit methyltransferase F (478 aa).

S-adenosyl-L-methionine-binding positions include 123-129 (AAAPGSK), glutamate 147, aspartate 174, and aspartate 192. Cysteine 245 acts as the Nucleophile in catalysis.

This sequence belongs to the class I-like SAM-binding methyltransferase superfamily. RsmB/NOP family.

The protein resides in the cytoplasm. It catalyses the reaction cytidine(1407) in 16S rRNA + S-adenosyl-L-methionine = 5-methylcytidine(1407) in 16S rRNA + S-adenosyl-L-homocysteine + H(+). Functionally, specifically methylates the cytosine at position 1407 (m5C1407) of 16S rRNA. In Vibrio campbellii (strain ATCC BAA-1116), this protein is Ribosomal RNA small subunit methyltransferase F.